Consider the following 440-residue polypeptide: Trigger factor (440 aa).

A PPIase FKBP-type domain is found at 163–248 (GDGVTVDFEG…VKKIESAHLP (86 aa)).

It belongs to the FKBP-type PPIase family. Tig subfamily.

The protein resides in the cytoplasm. It carries out the reaction [protein]-peptidylproline (omega=180) = [protein]-peptidylproline (omega=0). Its function is as follows. Involved in protein export. Acts as a chaperone by maintaining the newly synthesized protein in an open conformation. Functions as a peptidyl-prolyl cis-trans isomerase. This is Trigger factor from Verminephrobacter eiseniae (strain EF01-2).